Reading from the N-terminus, the 192-residue chain is Immunoglobulin superfamily member 23 (192 aa).

A disordered region spans residues 1-26; sequence MRAKPQSPLPRNPVPAWSPPTTTTDP. Residues 7–18 show a composition bias toward pro residues; the sequence is SPLPRNPVPAWS. Positions 20 to 128 constitute an Ig-like domain; it reads PTTTTDPMLE…QLVSEPVTIS (109 aa). N64 carries an N-linked (GlcNAc...) asparagine glycan. Residues 158–178 form a helical membrane-spanning segment; the sequence is LLAAGILGAGALIAGMCFIII.

Expressed in bone and small intestine. Highly expressed in osteoclasts, and low expressed in osteoblasts and peripheral blood mononuclear cells (PBMCs).

It is found in the cell membrane. Its function is as follows. May be involved in osteoclast differentiation. This Homo sapiens (Human) protein is Immunoglobulin superfamily member 23.